A 436-amino-acid polypeptide reads, in one-letter code: MSMFLDTAKVSVKAGRGGDGMVAFRREKYVANGGPWGGDGGRGGDVIFVVNEGLRTLMDFRYNRHFKAKAGEKGMTKGMHGRGAENLYVSVPQGTTVRDAQTGKVIADLVKNGQEFIVAHGGRGGRGNIRFATPRNPAPEISENGEPGEERELALELKILADVGLVGFPSVGKSTLLSVITAAKPKIGAYHFTTIVPNLGMVRTKSGDSFAVADLPGLIEGASQGVGLGTQFLRHIERTRVILHVIDMSASEGRDPYEDYLAINKELETYNLRLLERPQIIVANKMDMPQAAENLEQFKEKLDANYGEFDDKPQIFPISGIAHQGLDALLDATAQLLAQTDDFLLYDESDMQEEAYYGFEEEEKAFDISRADDAAWVLSGEKLEKLFVMTNMERDEAIMKFSRQLRGMGVDQALRERGAKDGDIVRIGKFEFEFVD.

The Obg domain occupies 2-160; the sequence is SMFLDTAKVS…RELALELKIL (159 aa). Residues 161-338 enclose the OBG-type G domain; it reads ADVGLVGFPS…LLDATAQLLA (178 aa). Residues 167–174, 192–196, 214–217, 284–287, and 319–321 each bind GTP; these read GFPSVGKS, FTTIV, DLPG, NKMD, and SGI. Mg(2+) is bound by residues S174 and T194. The 79-residue stretch at 358-436 folds into the OCT domain; the sequence is GFEEEEKAFD…IGKFEFEFVD (79 aa).

The protein belongs to the TRAFAC class OBG-HflX-like GTPase superfamily. OBG GTPase family. In terms of assembly, monomer. Mg(2+) is required as a cofactor.

The protein resides in the cytoplasm. An essential GTPase which binds GTP, GDP and possibly (p)ppGpp with moderate affinity, with high nucleotide exchange rates and a fairly low GTP hydrolysis rate. Plays a role in control of the cell cycle, stress response, ribosome biogenesis and in those bacteria that undergo differentiation, in morphogenesis control. This is GTPase Obg from Streptococcus mutans serotype c (strain ATCC 700610 / UA159).